We begin with the raw amino-acid sequence, 156 residues long: Transcription elongation factor GreA (156 aa).

A coiled-coil region spans residues 46 to 66; sequence AEYHSAREKQSFIEGRIKELE.

This sequence belongs to the GreA/GreB family.

Functionally, necessary for efficient RNA polymerase transcription elongation past template-encoded arresting sites. The arresting sites in DNA have the property of trapping a certain fraction of elongating RNA polymerases that pass through, resulting in locked ternary complexes. Cleavage of the nascent transcript by cleavage factors such as GreA or GreB allows the resumption of elongation from the new 3'terminus. GreA releases sequences of 2 to 3 nucleotides. This is Transcription elongation factor GreA from Ruegeria pomeroyi (strain ATCC 700808 / DSM 15171 / DSS-3) (Silicibacter pomeroyi).